The sequence spans 252 residues: Chlorophyll a-b binding protein P4, chloroplastic (252 aa).

Trp-56 contributes to the chlorophyll b binding site. Residues Phe-76 and Glu-95 each coordinate chlorophyll a. Arg-100 is a binding site for chlorophyll b. 2 helical membrane passes run Trp-101–Ile-121 and Tyr-134–Ile-154. Positions 137, 143, 153, and 156 each coordinate chlorophyll b. Chlorophyll a-binding residues include Lys-203, Glu-204, Asn-207, Arg-209, Gln-221, and His-236.

The protein belongs to the light-harvesting chlorophyll a/b-binding (LHC) protein family. As to quaternary structure, the LHC complex consists of chlorophyll a-b binding proteins. Requires Binds at least 14 chlorophylls (8 Chl-a and 6 Chl-b) and carotenoids such as lutein and neoxanthin. as cofactor. In terms of processing, photoregulated by reversible phosphorylation of its threonine residues.

The protein localises to the plastid. It localises to the chloroplast thylakoid membrane. The light-harvesting complex (LHC) functions as a light receptor, it captures and delivers excitation energy to photosystems with which it is closely associated. In terms of biological role, may channel protons produced in the catalytic Mn center of water oxidation into the thylakoid lumen. This is Chlorophyll a-b binding protein P4, chloroplastic from Pisum sativum (Garden pea).